A 446-amino-acid chain; its full sequence is tRNA modification GTPase MnmE (446 aa).

(6S)-5-formyl-5,6,7,8-tetrahydrofolate-binding residues include arginine 22, glutamate 80, and arginine 119. Residues 215–370 form the TrmE-type G domain; the sequence is GFKVAIIGKP…LILALENIMN (156 aa). Asparagine 225 lines the K(+) pocket. Residues 225–230, 244–250, and 269–272 contribute to the GTP site; these read NVGKSS, SDIAGTT, and DTAG. Serine 229 is a Mg(2+) binding site. K(+) contacts are provided by serine 244, isoleucine 246, and threonine 249. Mg(2+) is bound at residue threonine 250. Position 446 (lysine 446) interacts with (6S)-5-formyl-5,6,7,8-tetrahydrofolate.

The protein belongs to the TRAFAC class TrmE-Era-EngA-EngB-Septin-like GTPase superfamily. TrmE GTPase family. Homodimer. Heterotetramer of two MnmE and two MnmG subunits. It depends on K(+) as a cofactor.

The protein resides in the cytoplasm. Functionally, exhibits a very high intrinsic GTPase hydrolysis rate. Involved in the addition of a carboxymethylaminomethyl (cmnm) group at the wobble position (U34) of certain tRNAs, forming tRNA-cmnm(5)s(2)U34. This Sulfurimonas denitrificans (strain ATCC 33889 / DSM 1251) (Thiomicrospira denitrificans (strain ATCC 33889 / DSM 1251)) protein is tRNA modification GTPase MnmE.